The following is a 562-amino-acid chain: Sesquiterpene synthase (562 aa).

Mg(2+) contacts are provided by Asp315, Asp319, and Glu467. Residues 315-319 (DDIYD) carry the DDXXD motif motif.

The protein belongs to the terpene synthase family. Tpsa subfamily. Mg(2+) serves as cofactor. The cofactor is Mn(2+).

Functionally, catalyzes the formation of beta-elemol, guaiol and bulnesol. This is Sesquiterpene synthase from Santalum spicatum (Australian sandalwood).